Here is a 165-residue protein sequence, read N- to C-terminus: Protein SprT (165 aa).

Positions 20–163 (EKLAQANLKL…RCVHCGEQLV (144 aa)) constitute a SprT-like domain. Position 78 (H78) interacts with Zn(2+). The active site involves E79. Zn(2+) is bound at residue H82.

It belongs to the SprT family. Zn(2+) is required as a cofactor.

The protein localises to the cytoplasm. In Shigella flexneri serotype 5b (strain 8401), this protein is Protein SprT.